The sequence spans 254 residues: Tubulin-specific chaperone B (254 aa).

A CAP-Gly domain is found at Pro182–Arg225. Positions Lys234–Ile254 are disordered. A compositionally biased stretch (acidic residues) spans Glu237–Ile254.

The protein belongs to the TBCB family. In terms of assembly, binds to monomeric alpha-tubulin.

Its subcellular location is the cytoplasm. It is found in the cytoskeleton. Acts to sequester alpha-tubulin from interaction with beta-tubulin, raising the possibility that it plays a regulatory role in the formation of the tubulin heterodimer. The protein is Tubulin-specific chaperone B (ALF1) of Saccharomyces cerevisiae (strain ATCC 204508 / S288c) (Baker's yeast).